Consider the following 133-residue polypeptide: Small ribosomal subunit protein eS8 (133 aa).

The disordered stretch occupies residues 1-34; sequence MGVWHGRSLRKPTGGRIRPHRKKRKFEMGNPPTE.

It belongs to the eukaryotic ribosomal protein eS8 family. As to quaternary structure, part of the 30S ribosomal subunit.

In Methanopyrus kandleri (strain AV19 / DSM 6324 / JCM 9639 / NBRC 100938), this protein is Small ribosomal subunit protein eS8.